We begin with the raw amino-acid sequence, 230 residues long: Ribosomal RNA large subunit methyltransferase E (230 aa).

Positions 82, 84, 100, 116, and 140 each coordinate S-adenosyl-L-methionine. Residue K180 is the Proton acceptor of the active site.

The protein belongs to the class I-like SAM-binding methyltransferase superfamily. RNA methyltransferase RlmE family.

Its subcellular location is the cytoplasm. The enzyme catalyses uridine(2552) in 23S rRNA + S-adenosyl-L-methionine = 2'-O-methyluridine(2552) in 23S rRNA + S-adenosyl-L-homocysteine + H(+). Its function is as follows. Specifically methylates the uridine in position 2552 of 23S rRNA at the 2'-O position of the ribose in the fully assembled 50S ribosomal subunit. This is Ribosomal RNA large subunit methyltransferase E from Granulibacter bethesdensis (strain ATCC BAA-1260 / CGDNIH1).